We begin with the raw amino-acid sequence, 340 residues long: S-adenosylmethionine:tRNA ribosyltransferase-isomerase (340 aa).

The protein belongs to the QueA family. Monomer.

It is found in the cytoplasm. It carries out the reaction 7-aminomethyl-7-carbaguanosine(34) in tRNA + S-adenosyl-L-methionine = epoxyqueuosine(34) in tRNA + adenine + L-methionine + 2 H(+). The protein operates within tRNA modification; tRNA-queuosine biosynthesis. Its function is as follows. Transfers and isomerizes the ribose moiety from AdoMet to the 7-aminomethyl group of 7-deazaguanine (preQ1-tRNA) to give epoxyqueuosine (oQ-tRNA). This chain is S-adenosylmethionine:tRNA ribosyltransferase-isomerase, found in Chlorobaculum parvum (strain DSM 263 / NCIMB 8327) (Chlorobium vibrioforme subsp. thiosulfatophilum).